The chain runs to 105 residues: MMIEGLEKMLAKGVDNALLRFGLGKGYLDAGDAERAAEHLQRCVEQDPKYSAGWKLLGKARQAAGDLAGARQAWEQGLATAATHGDKQAEKEMTVFLRKLDRART.

TPR repeat units follow at residues 17–50 (ALLRFGLGKGYLDAGDAERAAEHLQRCVEQDPKY) and 52–84 (AGWKLLGKARQAAGDLAGARQAWEQGLATAATH).

This Pseudomonas aeruginosa (strain ATCC 15692 / DSM 22644 / CIP 104116 / JCM 14847 / LMG 12228 / 1C / PRS 101 / PAO1) protein is TPR repeat-containing protein PA0015.